We begin with the raw amino-acid sequence, 566 residues long: Arginine--tRNA ligase (566 aa).

A 'HIGH' region motif is present at residues 120-130 (PNIAKPFHVGH).

Belongs to the class-I aminoacyl-tRNA synthetase family. In terms of assembly, monomer.

It is found in the cytoplasm. The catalysed reaction is tRNA(Arg) + L-arginine + ATP = L-arginyl-tRNA(Arg) + AMP + diphosphate. The chain is Arginine--tRNA ligase from Clostridium kluyveri (strain NBRC 12016).